The sequence spans 717 residues: Polyribonucleotide nucleotidyltransferase (717 aa).

Aspartate 488 and aspartate 494 together coordinate Mg(2+). The region spanning 555–614 is the KH domain; it reads PRIEVMNIPVDKIREVIGSGGKVIREIVEKTGAKINIEDDGTVKIASSSGKEIEAARKWI. An S1 motif domain is found at 624–692; it reads GQIYEGTVVK…ERGKVRLSMK (69 aa).

It belongs to the polyribonucleotide nucleotidyltransferase family. Mg(2+) serves as cofactor.

Its subcellular location is the cytoplasm. The catalysed reaction is RNA(n+1) + phosphate = RNA(n) + a ribonucleoside 5'-diphosphate. Its function is as follows. Involved in mRNA degradation. Catalyzes the phosphorolysis of single-stranded polyribonucleotides processively in the 3'- to 5'-direction. The polypeptide is Polyribonucleotide nucleotidyltransferase (Sinorhizobium fredii (strain NBRC 101917 / NGR234)).